The primary structure comprises 224 residues: Probable C-&gt;U-editing enzyme APOBEC-2 (224 aa).

Residues 1–25 are disordered; sequence MAQKEEAAAATEAASQNGEDLENLD. Zn(2+) contacts are provided by Glu60 and His98. The CMP/dCMP-type deaminase domain occupies 64–169; it reads GRNKTFLCYV…LEIQDALKKL (106 aa). The active-site Proton donor is Glu100. Cys128 and Cys131 together coordinate Zn(2+).

It belongs to the cytidine and deoxycytidylate deaminase family. Homotetramer. Requires Zn(2+) as cofactor.

It carries out the reaction cytidine(6666) in apoB mRNA + H2O + H(+) = uridine(6666) in apoB mRNA + NH4(+). In terms of biological role, probable C to U editing enzyme whose physiological substrate is not yet known. Does not display detectable apoB mRNA editing. Has a low intrinsic cytidine deaminase activity. May play a role in the epigenetic regulation of gene expression through the process of active DNA demethylation. In Pongo pygmaeus (Bornean orangutan), this protein is Probable C-&gt;U-editing enzyme APOBEC-2 (APOBEC2).